A 116-amino-acid polypeptide reads, in one-letter code: Ribonuclease P protein component 2 (116 aa).

It belongs to the eukaryotic/archaeal RNase P protein component 2 family. As to quaternary structure, consists of a catalytic RNA component and at least 4-5 protein subunits.

It is found in the cytoplasm. It carries out the reaction Endonucleolytic cleavage of RNA, removing 5'-extranucleotides from tRNA precursor.. Its function is as follows. Part of ribonuclease P, a protein complex that generates mature tRNA molecules by cleaving their 5'-ends. In Methanosarcina mazei (strain ATCC BAA-159 / DSM 3647 / Goe1 / Go1 / JCM 11833 / OCM 88) (Methanosarcina frisia), this protein is Ribonuclease P protein component 2.